Here is a 176-residue protein sequence, read N- to C-terminus: Disulfide bond formation protein B (176 aa).

The Cytoplasmic portion of the chain corresponds to 1 to 11; that stretch reads MLQLTTYRNLQ. The chain crosses the membrane as a helical span at residues 12-28; the sequence is VFLVIMTAIGMSFALFF. At 29–46 the chain is on the periplasmic side; that stretch reads LQRYMGFSPCPLCIFQRI. An intrachain disulfide couples Cys38 to Cys41. A helical membrane pass occupies residues 47–63; sequence GLMIMGGFALIAALFHP. The Cytoplasmic portion of the chain corresponds to 64-70; it reads KSMVIRL. Residues 71-88 traverse the membrane as a helical segment; it reads LLWLGSLAGIGWAAIVAG. At 89–145 the chain is on the periplasmic side; it reads RHVWLQHLPADQVPSCGPGLDYWLDTLPMQQVLKEVFAGSGECASIDWTFLGLSIPE. An intrachain disulfide couples Cys104 to Cys131. A helical membrane pass occupies residues 146–164; sequence QSLILFSILILTHLLILWR. At 165–176 the chain is on the cytoplasmic side; the sequence is IVRPATPKPLAR.

The protein belongs to the DsbB family.

The protein resides in the cell inner membrane. Its function is as follows. Required for disulfide bond formation in some periplasmic proteins. Acts by oxidizing the DsbA protein. The polypeptide is Disulfide bond formation protein B (Psychrobacter cryohalolentis (strain ATCC BAA-1226 / DSM 17306 / VKM B-2378 / K5)).